A 400-amino-acid polypeptide reads, in one-letter code: MGAPLSTTRRGMGQNLSVPNPLGFFPDHQLDPLFRANSSSPDWDFNKNKDNWPMANKVGVGGYGPGFTPPHGGLLGWSPQAQGVLTTLPADPPPASTNRRSGRKPTPVSPPLRDTHPQAMQWNSTQFHQALLDPRVRALYFPAGGSSSETQNPAPTIASLTSSIFLKTGGPATNMDNITSGLLGPLLVLQAVCFLLTKILTIPQSLDSWWTSLNFLGGTPGCPGQNSQSPTSNHLPTSCPPTCPGYRWMCLRRFIIFLFILLLCLIFLLVLVDYQGMLPVCPPLPGSTTTSTGPCKTCTTLAQGTSMFPSCCCSKPSDGNCTCIPIPSSWALGKYLWEWASARFSWLSLLVQFVQWCVGLSPTVWLLVIWMIWYWGPNLCSILSPFIPLLPIFCYLWVSI.

Met1 is modified (N-acetylmethionine). Residue Gly2 is the site of N-myristoyl glycine; by host attachment. Residues Gly2–Ala119 are pre-S1. The pre-S stretch occupies residues Gly2–Asn174. Residues Gly2 to Gly181 are Virion surface; in external conformation-facing. At Gly2–Arg253 the chain is on the intravirion; in internal conformation side. N-linked (GlcNAc...) asparagine glycosylation occurs at Pro4. The disordered stretch occupies residues Val84–Asp114. Positions Met120 to Asn174 are pre-S2. Residues Leu182 to Ile202 traverse the membrane as a helical segment. Residues Pro203–Arg253 lie on the Intravirion; in external conformation side of the membrane. The helical transmembrane segment at Phe254–Tyr274 threads the bilayer. The Virion surface segment spans residues Gln275–Ser348. An N-linked (GlcNAc...) asparagine; by host glycan is attached at Asn320. Residues Leu349–Ile369 form a helical membrane-spanning segment. At Trp370–Trp375 the chain is on the intravirion side. A helical transmembrane segment spans residues Gly376 to Val398. At Ser399–Ile400 the chain is on the virion surface side.

The protein belongs to the orthohepadnavirus major surface antigen family. In its internal form (Li-HBsAg), interacts with the capsid protein and with the isoform S. Interacts with host chaperone CANX. In terms of assembly, associates with host chaperone CANX through its pre-S2 N glycan; this association may be essential for isoform M proper secretion. As to quaternary structure, interacts with isoform L. Interacts with the antigens of satellite virus HDV (HDVAgs); this interaction is required for encapsidation of HDV genomic RNA. Post-translationally, isoform M is N-terminally acetylated by host at a ratio of 90%, and N-glycosylated by host at the pre-S2 region. In terms of processing, myristoylated.

It localises to the virion membrane. The large envelope protein exists in two topological conformations, one which is termed 'external' or Le-HBsAg and the other 'internal' or Li-HBsAg. In its external conformation the protein attaches the virus to cell receptors and thereby initiating infection. This interaction determines the species specificity and liver tropism. This attachment induces virion internalization predominantly through caveolin-mediated endocytosis. The large envelope protein also assures fusion between virion membrane and endosomal membrane. In its internal conformation the protein plays a role in virion morphogenesis and mediates the contact with the nucleocapsid like a matrix protein. Its function is as follows. The middle envelope protein plays an important role in the budding of the virion. It is involved in the induction of budding in a nucleocapsid independent way. In this process the majority of envelope proteins bud to form subviral lipoprotein particles of 22 nm of diameter that do not contain a nucleocapsid. This is Large envelope protein from Homo sapiens (Human).